The sequence spans 391 residues: Phosphoglycerate kinase (391 aa).

Residues 21-23, Arg36, 59-62, Arg113, and Arg146 contribute to the substrate site; these read DLN and HLGR. ATP contacts are provided by residues Lys197, Glu319, and 345–348; that span reads GGDT.

It belongs to the phosphoglycerate kinase family. In terms of assembly, monomer.

Its subcellular location is the cytoplasm. The enzyme catalyses (2R)-3-phosphoglycerate + ATP = (2R)-3-phospho-glyceroyl phosphate + ADP. It participates in carbohydrate degradation; glycolysis; pyruvate from D-glyceraldehyde 3-phosphate: step 2/5. The sequence is that of Phosphoglycerate kinase from Xylella fastidiosa (strain 9a5c).